The chain runs to 462 residues: L-seryl-tRNA(Sec) selenium transferase (462 aa).

Position 293 is an N6-(pyridoxal phosphate)lysine (Lys-293).

This sequence belongs to the SelA family. The cofactor is pyridoxal 5'-phosphate.

The protein resides in the cytoplasm. It catalyses the reaction L-seryl-tRNA(Sec) + selenophosphate + H(+) = L-selenocysteinyl-tRNA(Sec) + phosphate. It functions in the pathway aminoacyl-tRNA biosynthesis; selenocysteinyl-tRNA(Sec) biosynthesis; selenocysteinyl-tRNA(Sec) from L-seryl-tRNA(Sec) (bacterial route): step 1/1. Functionally, converts seryl-tRNA(Sec) to selenocysteinyl-tRNA(Sec) required for selenoprotein biosynthesis. The sequence is that of L-seryl-tRNA(Sec) selenium transferase from Clostridium botulinum (strain 657 / Type Ba4).